The primary structure comprises 175 residues: NADH-quinone oxidoreductase subunit I (175 aa).

2 consecutive 4Fe-4S ferredoxin-type domains span residues 44-74 (LNRY…VEGA) and 90-119 (RVYQ…MTND). [4Fe-4S] cluster is bound by residues C54, C57, C60, C64, C99, C102, C105, and C109. The tract at residues 148 to 175 (PPHAMAPGATDEDYYRGTVSPSAEADAR) is disordered.

This sequence belongs to the complex I 23 kDa subunit family. As to quaternary structure, NDH-1 is composed of 14 different subunits. Subunits NuoA, H, J, K, L, M, N constitute the membrane sector of the complex. [4Fe-4S] cluster is required as a cofactor.

Its subcellular location is the cell membrane. It carries out the reaction a quinone + NADH + 5 H(+)(in) = a quinol + NAD(+) + 4 H(+)(out). NDH-1 shuttles electrons from NADH, via FMN and iron-sulfur (Fe-S) centers, to quinones in the respiratory chain. The immediate electron acceptor for the enzyme in this species is believed to be menaquinone. Couples the redox reaction to proton translocation (for every two electrons transferred, four hydrogen ions are translocated across the cytoplasmic membrane), and thus conserves the redox energy in a proton gradient. This Mycolicibacterium gilvum (strain PYR-GCK) (Mycobacterium gilvum (strain PYR-GCK)) protein is NADH-quinone oxidoreductase subunit I.